The sequence spans 642 residues: uncharacterized protein (642 aa).

2 residues coordinate Mg(2+): Glu15 and Asp118. Positions 29–149 constitute a PINc domain; the sequence is VCVDTCVVID…YNLAKAQGIE (121 aa). Residues 510–578 form the KH domain; that stretch reads DNSIDLIVPE…ELESTRIYET (69 aa).

In the N-terminal section; belongs to the PINc/VapC protein family. It depends on Mg(2+) as a cofactor.

This is an uncharacterized protein from Methanocaldococcus jannaschii (strain ATCC 43067 / DSM 2661 / JAL-1 / JCM 10045 / NBRC 100440) (Methanococcus jannaschii).